We begin with the raw amino-acid sequence, 594 residues long: MDRMTEDALRLNLLKRSLDPADERDDVLAKRLKMEGHEAMERLKMLALLKRKDLANLEVPHELPTKQDGSGVKGYEEKLNGNLRPHGDNNRTAGRPGKENINDEPVDMSARRSEPDRGRLTPSPDIIVLSDNEASSPRSSSRMEERLKAANLEMFKGKGMEERQQLIKQLRDELRLEEARLVLLKKLRQSQLQKENVVQKTPVVQNAASIVQPSPAHVGQQGLSKLPSRPGAQGIEPQNMRTLQGHSVIRSATNTTLPHMLMSQRVIAPNPAQLQGQRGPPKPGIVRTTTPNMNPAISYQPQSSSSVPCQRTTSSAIYMNLASHIQPGTVNRVSSPLPSPSAMSDAANSQAAAKLALRKQLEKTLLEIPPPKPPAPLLHFLPSAANSEFIYMVGLEEVVQSVIDSQGKNCASLLRVEPFVCAQCRTDFTPHWKQEKNGKILCEQCMTSNQKKALKAEHTNRLKNAFVKALQQEQEIEQRLQQQAALSPTTAPAVSSVSKQETIMRHHTLRQAPQPQSSLQRGIPTSARSMLSNFAQAPQLSVPGGLLGMPGVNIAYLNTGIGGHKAPSLADRQREYLLDMIPPRSISQSISGQK.

Position 17 is a phosphoserine (Ser17). Residues Lys33 and Lys66 each participate in a glycyl lysine isopeptide (Lys-Gly) (interchain with G-Cter in SUMO2) cross-link. The interval 62-143 is disordered; that stretch reads ELPTKQDGSG…ASSPRSSSRM (82 aa). Residues 74–89 show a composition bias toward basic and acidic residues; sequence GYEEKLNGNLRPHGDN. Lys98 participates in a covalent cross-link: Glycyl lysine isopeptide (Lys-Gly) (interchain with G-Cter in SUMO2). Positions 109–119 are enriched in basic and acidic residues; that stretch reads SARRSEPDRGR. The residue at position 121 (Thr121) is a Phosphothreonine. Phosphoserine is present on residues Ser123, Ser130, Ser135, and Ser136. Residues 130–140 are compositionally biased toward low complexity; the sequence is SDNEASSPRSS. A coiled-coil region spans residues 141 to 195; it reads SRMEERLKAANLEMFKGKGMEERQQLIKQLRDELRLEEARLVLLKKLRQSQLQKE. Residue Lys148 forms a Glycyl lysine isopeptide (Lys-Gly) (interchain with G-Cter in SUMO2) linkage. Residues 166 to 191 are CR1; interaction with MBD2 and MBD3; that stretch reads LIKQLRDELRLEEARLVLLKKLRQSQ. A Glycyl lysine isopeptide (Lys-Gly) (interchain with G-Cter in SUMO2) cross-link involves residue Lys200. The residue at position 209 (Ser209) is a Phosphoserine. The tract at residues 214–237 is disordered; it reads SPAHVGQQGLSKLPSRPGAQGIEP. A Glycyl lysine isopeptide (Lys-Gly) (interchain with G-Cter in SUMO2) cross-link involves residue Lys282. Residues Ser334, Ser339, and Ser341 each carry the phosphoserine modification. Positions 341 to 481 are CR2; histone tail-binding; sequence SAMSDAANSQ…QEQEIEQRLQ (141 aa). Residues Lys354, Lys455, and Lys468 each participate in a glycyl lysine isopeptide (Lys-Gly) (interchain with G-Cter in SUMO2) cross-link. The segment at 415–468 adopts a GATA-type zinc-finger fold; that stretch reads RVEPFVCAQCRTDFTPHWKQEKNGKILCEQCMTSNQKKALKAEHTNRLKNAFVK. Residues 450 to 483 adopt a coiled-coil conformation; the sequence is QKKALKAEHTNRLKNAFVKALQQEQEIEQRLQQQ. A Phosphoserine modification is found at Ser487. Lys499 is covalently cross-linked (Glycyl lysine isopeptide (Lys-Gly) (interchain with G-Cter in SUMO2)).

In terms of assembly, homooligomer. Component of the nucleosome remodeling and deacetylase (NuRD) repressor complex, composed of core proteins MTA1, MTA2, MTA3, RBBP4, RBBP7, HDAC1, HDAC2, MBD2, MBD3, and peripherally associated proteins CDK2AP1, CDK2AP2, GATAD2A, GATAD2B, CHD3, CHD4 and CHD5. The exact stoichiometry of the NuRD complex is unknown, and some subunits such as MBD2 and MBD3, GATAD2A and GATAD2B, and CHD3, CHD4 and CHD5 define mutually exclusive NuRD complexes. Interacts with MBD2; this is required for the enhancement of MBD2-mediated repression and for targeting to the chromatin. Interacts with MBD3. Component of the MeCP1 histone deacetylase complex. Interacts with histone tails, including that of histones H2A, H2B, H3 and H4. Interacts with ERCC6.

It is found in the nucleus speckle. It localises to the nucleus. The protein resides in the chromosome. Transcriptional repressor. Acts as a component of the histone deacetylase NuRD complex which participates in the remodeling of chromatin. Enhances MBD2-mediated repression. Efficient repression requires the presence of GATAD2A. Targets MBD3 to discrete loci in the nucleus. May play a role in synapse development. The sequence is that of Transcriptional repressor p66-beta (Gatad2b) from Mus musculus (Mouse).